Consider the following 522-residue polypeptide: Stellatic acid synthase (522 aa).

A helical transmembrane segment spans residues 23–43 (IYGIYEPLLALFAVYSVAVVV). Asparagine 267 and asparagine 451 each carry an N-linked (GlcNAc...) asparagine glycan. Cysteine 464 serves as a coordination point for heme. Asparagine 495 carries an N-linked (GlcNAc...) asparagine glycan.

The protein belongs to the cytochrome P450 family. Requires heme as cofactor.

It is found in the membrane. The catalysed reaction is stellata-2,6,19-triene + 3 reduced [NADPH--hemoprotein reductase] + 3 O2 = stellatate + 3 oxidized [NADPH--hemoprotein reductase] + 4 H2O + 4 H(+). Its pathway is secondary metabolite biosynthesis; terpenoid biosynthesis. Functionally, cytochrome P450 monooxygenase; part of the gene cluster that mediates the biosynthesis of the sesterterpene stellatic acid. The first step in the pathway is performed by the stellatatriene synthase that possesses both prenyl transferase and terpene cyclase activity, converting isopentenyl diphosphate and dimethylallyl diphosphate into geranylgeranyl diphosphate (GGDP) and then converting GGDP into stellata-2,6,19-triene. The cytochrome P450 monooxygenase Stl-P450 then catalyzes three successive oxidation reactions on the C-20 methyl group to generate the carboxylic acid of stellatic acid. The chain is Stellatic acid synthase from Emericella variicolor (Aspergillus stellatus).